The chain runs to 193 residues: ATP-dependent Clp protease proteolytic subunit (193 aa).

Ser-98 functions as the Nucleophile in the catalytic mechanism. The active site involves His-123.

The protein belongs to the peptidase S14 family. As to quaternary structure, fourteen ClpP subunits assemble into 2 heptameric rings which stack back to back to give a disk-like structure with a central cavity, resembling the structure of eukaryotic proteasomes.

The protein localises to the cytoplasm. It catalyses the reaction Hydrolysis of proteins to small peptides in the presence of ATP and magnesium. alpha-casein is the usual test substrate. In the absence of ATP, only oligopeptides shorter than five residues are hydrolyzed (such as succinyl-Leu-Tyr-|-NHMec, and Leu-Tyr-Leu-|-Tyr-Trp, in which cleavage of the -Tyr-|-Leu- and -Tyr-|-Trp bonds also occurs).. Cleaves peptides in various proteins in a process that requires ATP hydrolysis. Has a chymotrypsin-like activity. Plays a major role in the degradation of misfolded proteins. This is ATP-dependent Clp protease proteolytic subunit from Glaesserella parasuis serovar 5 (strain SH0165) (Haemophilus parasuis).